A 710-amino-acid chain; its full sequence is Homeobox-leucine zipper protein ROC8 (710 aa).

Residues 1–23 (MDFGDEPEGSDSQRRRKRYHRHT) are disordered. Basic residues predominate over residues 14-23 (RRRKRYHRHT). A DNA-binding region (homeobox) is located at residues 15 to 74 (RRKRYHRHTPRQIQQLEAMFKECPHPDENQRAQLSRELGLEPRQIKFWFQNRRTQMKAQH). Residues 82-144 (LRAENDKIRC…DRVSNLTSKY (63 aa)) are a coiled coil. One can recognise an START domain in the interval 197–440 (SDMERPMMAE…LQRACERYAS (244 aa)). The segment covering 630–648 (RPGSAAGASTSSAGPLAAA) has biased composition (low complexity). The tract at residues 630–650 (RPGSAAGASTSSAGPLAAARG) is disordered.

Belongs to the HD-ZIP homeobox family. Class IV subfamily.

Its subcellular location is the nucleus. Probable transcription factor. In Oryza sativa subsp. japonica (Rice), this protein is Homeobox-leucine zipper protein ROC8 (ROC8).